We begin with the raw amino-acid sequence, 189 residues long: Interferon alpha-10 (189 aa).

The first 23 residues, 1–23 (MALSFSLLMAVLVLSYKSICSLG), serve as a signal peptide directing secretion. 2 disulfides stabilise this stretch: cysteine 24/cysteine 122 and cysteine 52/cysteine 162.

This sequence belongs to the alpha/beta interferon family.

The protein resides in the secreted. Functionally, produced by macrophages, IFN-alpha have antiviral activities. Interferon stimulates the production of two enzymes: a protein kinase and an oligoadenylate synthetase. This chain is Interferon alpha-10 (IFNA10), found in Homo sapiens (Human).